The following is a 196-amino-acid chain: MADS-box transcription factor 32 (196 aa).

The MADS-box domain occupies 1 to 61 (MGRGRSEIKR…GKLYHFLSPT (61 aa)). The region spanning 85–175 (RQERRAELEK…CDKIAHAQTL (91 aa)) is the K-box domain.

Its subcellular location is the nucleus. Functionally, probable transcription factor. In Oryza sativa subsp. japonica (Rice), this protein is MADS-box transcription factor 32 (MADS32).